The chain runs to 998 residues: Probable protein kinase DDB_G0277539 (998 aa).

Disordered regions lie at residues 1 to 34 (MDFPSQSEKKKYITKKRTTLFSYDDDDDDDDFDQ), 65 to 207 (CEDQ…TNEF), 265 to 284 (INNNYNNNNNNEEDQIFSSS), 316 to 367 (SNGS…NYSS), 380 to 420 (ERTN…PNSI), and 435 to 489 (RLQS…NNNN). Positions 23-32 (YDDDDDDDDF) are enriched in acidic residues. The span at 70-139 (QQQQQQSSSP…NNNNNNNNNN (70 aa)) shows a compositional bias: low complexity. The span at 140 to 150 (SHHHHLRKGRR) shows a compositional bias: basic residues. The span at 166 to 177 (ASLSSTKTNMFP) shows a compositional bias: polar residues. Low complexity-rich tracts occupy residues 184-203 (SSPSSQQQQQQQQQQSQSQQ) and 265-274 (INNNYNNNNN). Positions 316-328 (SNGSYNKGNTFPS) are enriched in polar residues. A compositionally biased stretch (basic and acidic residues) spans 330–340 (EVKRVRPDQRA). 2 stretches are compositionally biased toward low complexity: residues 393-415 (NVNNNNNNNANNNNVNNNNNNNN) and 450-489 (NNNNNNNNASNNNNDNNNNNNNNNNNNNNNDDTCNNNNNN). Residues 508 to 849 (FQELDLIGEG…AEQLLEHPLI (342 aa)) form the Protein kinase domain. ATP-binding positions include 514 to 522 (IGEGSFGHV) and Lys-537. Asp-631 (proton acceptor) is an active-site residue. Mg(2+) contacts are provided by Asn-636 and Glu-677.

Belongs to the protein kinase superfamily. Ser/Thr protein kinase family. WEE1 subfamily.

It catalyses the reaction L-seryl-[protein] + ATP = O-phospho-L-seryl-[protein] + ADP + H(+). The enzyme catalyses L-threonyl-[protein] + ATP = O-phospho-L-threonyl-[protein] + ADP + H(+). The protein is Probable protein kinase DDB_G0277539 of Dictyostelium discoideum (Social amoeba).